A 265-amino-acid chain; its full sequence is Glutamate racemase (265 aa).

Substrate-binding positions include 7–8 (DS) and 39–40 (YG). C71 (proton donor/acceptor) is an active-site residue. 72–73 (NT) contacts substrate. C184 acts as the Proton donor/acceptor in catalysis. Residue 185-186 (TH) participates in substrate binding.

It belongs to the aspartate/glutamate racemases family.

The enzyme catalyses L-glutamate = D-glutamate. It functions in the pathway cell wall biogenesis; peptidoglycan biosynthesis. In terms of biological role, provides the (R)-glutamate required for cell wall biosynthesis. This chain is Glutamate racemase, found in Sulfurovum sp. (strain NBC37-1).